Consider the following 300-residue polypeptide: uncharacterized protein (300 aa).

An N-terminal signal peptide occupies residues 1-22 (MKSFVWTLLGALSLGSLTTAYG).

It localises to the endoplasmic reticulum. This is an uncharacterized protein from Schizosaccharomyces pombe (strain 972 / ATCC 24843) (Fission yeast).